We begin with the raw amino-acid sequence, 336 residues long: Probable G-protein coupled receptor 160 (336 aa).

The Extracellular portion of the chain corresponds to 1–21 (MTALPSKNCSFQYQSHQAPRS). Residue Asn8 is glycosylated (N-linked (GlcNAc...) asparagine). Residues 22–42 (LDATCLLLLIILGKVLLNVLI) form a helical membrane-spanning segment. Residues 43–56 (LRVKRKDTSWSFME) are Cytoplasmic-facing. A helical membrane pass occupies residues 57–77 (YFCFSLALVDLLLLVNISVLT). The Extracellular segment spans residues 78 to 95 (YFRDFVVLGIRFTNYHIC). Residues 96-116 (LLTQIVSFAYGFLHYPVCSLA) traverse the membrane as a helical segment. Topologically, residues 117–136 (CIDYWCNLSRATKPSSRWQK) are cytoplasmic. The chain crosses the membrane as a helical span at residues 137-157 (LLYLLTVILTWISVLAYVLGD). Over 158 to 187 (PAISASLKTHKTSVNQCPSYVSTQSHWLSL) the chain is Extracellular. The chain crosses the membrane as a helical span at residues 188 to 208 (SMLMILSVAFLISWQEVVALI). The Cytoplasmic segment spans residues 209-243 (QAIRIASYKNKAVLYFPFPPHTSYTVSPRAVLLPR). A helical membrane pass occupies residues 244 to 264 (LIVCFLGTWFPFVALQVLILS). Residues 265-272 (LRVQIPAY) are Extracellular-facing. The chain crosses the membrane as a helical span at residues 273 to 293 (IEMNVPWLYFVNSFLIAAVYW). Over 294–336 (FNCHKLYWRDGMFPVDPFINWKCCFVPVHRLKQVERPMSIIIC) the chain is Cytoplasmic.

It belongs to the G-protein coupled receptor 1 family.

It is found in the cell membrane. Functionally, orphan receptor. In Rattus norvegicus (Rat), this protein is Probable G-protein coupled receptor 160 (Gpr160).